A 177-amino-acid polypeptide reads, in one-letter code: Large ribosomal subunit protein uL6 (177 aa).

This sequence belongs to the universal ribosomal protein uL6 family. As to quaternary structure, part of the 50S ribosomal subunit.

Its function is as follows. This protein binds to the 23S rRNA, and is important in its secondary structure. It is located near the subunit interface in the base of the L7/L12 stalk, and near the tRNA binding site of the peptidyltransferase center. The chain is Large ribosomal subunit protein uL6 from Shewanella baltica (strain OS223).